A 261-amino-acid polypeptide reads, in one-letter code: Putative hydro-lyase SSP0308 (261 aa).

It belongs to the D-glutamate cyclase family.

This is Putative hydro-lyase SSP0308 from Staphylococcus saprophyticus subsp. saprophyticus (strain ATCC 15305 / DSM 20229 / NCIMB 8711 / NCTC 7292 / S-41).